A 149-amino-acid polypeptide reads, in one-letter code: UPF0178 protein Pmen_0294 (149 aa).

The protein belongs to the UPF0178 family.

This Ectopseudomonas mendocina (strain ymp) (Pseudomonas mendocina) protein is UPF0178 protein Pmen_0294.